The primary structure comprises 238 residues: Ribonuclease PH (238 aa).

Phosphate contacts are provided by residues R86 and 124 to 126; that span reads GTR.

This sequence belongs to the RNase PH family. In terms of assembly, homohexameric ring arranged as a trimer of dimers.

It catalyses the reaction tRNA(n+1) + phosphate = tRNA(n) + a ribonucleoside 5'-diphosphate. Phosphorolytic 3'-5' exoribonuclease that plays an important role in tRNA 3'-end maturation. Removes nucleotide residues following the 3'-CCA terminus of tRNAs; can also add nucleotides to the ends of RNA molecules by using nucleoside diphosphates as substrates, but this may not be physiologically important. Probably plays a role in initiation of 16S rRNA degradation (leading to ribosome degradation) during starvation. The polypeptide is Ribonuclease PH (Salmonella choleraesuis (strain SC-B67)).